Here is a 121-residue protein sequence, read N- to C-terminus: MPTINQLVRKNRKQKKSQSKSPVLEKCPQKQGVCLQVRTMTPKKPNSALRKITRVRLSNGKEVTVYIPGEGHNLQEHSIVLVRGGRVRDLPGVRYQVVRGSRDALGVDGRKQSRSRYGAKK.

The disordered stretch occupies residues 1-25 (MPTINQLVRKNRKQKKSQSKSPVLE). Residues 9–18 (RKNRKQKKSQ) show a composition bias toward basic residues. Asp-89 carries the 3-methylthioaspartic acid modification.

This sequence belongs to the universal ribosomal protein uS12 family. As to quaternary structure, part of the 30S ribosomal subunit. Contacts proteins S8 and S17. May interact with IF1 in the 30S initiation complex.

Functionally, with S4 and S5 plays an important role in translational accuracy. Interacts with and stabilizes bases of the 16S rRNA that are involved in tRNA selection in the A site and with the mRNA backbone. Located at the interface of the 30S and 50S subunits, it traverses the body of the 30S subunit contacting proteins on the other side and probably holding the rRNA structure together. The combined cluster of proteins S8, S12 and S17 appears to hold together the shoulder and platform of the 30S subunit. The sequence is that of Small ribosomal subunit protein uS12 from Rhodopirellula baltica (strain DSM 10527 / NCIMB 13988 / SH1).